The primary structure comprises 203 residues: NAD(P)H dehydrogenase (quinone) (203 aa).

The Flavodoxin-like domain occupies 3 to 194 (VLIAYYSMYG…AAARYQGKHV (192 aa)). FMN contacts are provided by residues 9–14 (SMYGHI) and 82–84 (TRF). Tyr-11 lines the NAD(+) pocket. Trp-102 is a substrate binding site. Residues 117–123 (SSATQHG) and His-138 contribute to the FMN site.

The protein belongs to the WrbA family. Requires FMN as cofactor.

It carries out the reaction a quinone + NADH + H(+) = a quinol + NAD(+). It catalyses the reaction a quinone + NADPH + H(+) = a quinol + NADP(+). This chain is NAD(P)H dehydrogenase (quinone), found in Geotalea uraniireducens (strain Rf4) (Geobacter uraniireducens).